A 957-amino-acid chain; its full sequence is MTQTLSQLENSGAFIERHIGPDAAQQQEMLNAVGAQSLNALTGQIVPKDIQLATPPQVGAPATEYAALAELKAIASRNKRFTSYIGMGYTAVQLPPVILRNMLENPGWYTAYTPYQPEVSQGRLEALLNFQQVTLDLTGLDMASASLLDEATAAAEAMAMAKRVSKLKNANRFFVASDVHPQTLDVVRTRAETFGFEVIVDDAQKVLDHQDVFGVLLQQVGTTGEIHDYTALISELKSRKIVVSVAADIMALVLLTAPGKQGADIVFGSAQRFGVPMGYGGPHAAFFAAKDEYKRSMPGRIIGVSKDAAGNTALRMAMQTREQHIRREKANSNICTSQVLLANIASLYAVYHGPVGLKRIANRIHRLTDILAAGLQQKGLKLRHAHYFDTLCVEVADKAGVLTRAEAAEINLRSDILNAVGITLDETTTRENVMQLFSVLLGDNHGLEIDTLDKDVAHDSRSIQPAMLRDDEILTHPVFNRYHSETEMMRYMHSLERKDLALNQAMIPLGSCTMKLNAAAEMIPITWPEFAELHPFCPPEQAEGYQQMIAQLADWLVKLTGYDAVCMQPNSGAQGEYAGLLAIRHYHESRNEGHRDICLIPASAHGTNPASAHMAGMQVVVVACDKNGNIDLTDLRAKAEQAGDNLSCIMVTYPSTHGVYEETIREVCEVVHQFGGQVYLDGANMNAQVGITSPGFIGADVSHLNLHKTFCIPHGGGGPGMGPIGVKAHLAPFVPGHSVVQIEGMLTRQGAVSAAPFGSASILPISWMYIRMMGAEGLKKASQVAILNANYIASRLQDAFPVLYTGRDGRVAHECILDIRPLKEETGISELDIAKRLIDYGFHAPTMSFPVAGTLMVEPTESESKVELDRFIDAMLAIRAEIDQVKAAVWPLEDNPLVNAPHIQSELVAEWAHPYSREVAVFPAGVADKYWPTVKRLDDVYGDRNLFCSCVPISEYQ.

Lysine 708 bears the N6-(pyridoxal phosphate)lysine mark.

The protein belongs to the GcvP family. As to quaternary structure, the glycine cleavage system is composed of four proteins: P, T, L and H. The cofactor is pyridoxal 5'-phosphate.

It carries out the reaction N(6)-[(R)-lipoyl]-L-lysyl-[glycine-cleavage complex H protein] + glycine + H(+) = N(6)-[(R)-S(8)-aminomethyldihydrolipoyl]-L-lysyl-[glycine-cleavage complex H protein] + CO2. Its function is as follows. The glycine cleavage system catalyzes the degradation of glycine. The P protein binds the alpha-amino group of glycine through its pyridoxal phosphate cofactor; CO(2) is released and the remaining methylamine moiety is then transferred to the lipoamide cofactor of the H protein. This chain is Glycine dehydrogenase (decarboxylating), found in Shigella sonnei (strain Ss046).